The chain runs to 453 residues: Bifunctional protein GlmU (453 aa).

The pyrophosphorylase stretch occupies residues 1-225; that stretch reads MNIVILAAGT…EWETLGVNSK (225 aa). UDP-N-acetyl-alpha-D-glucosamine-binding positions include 6 to 9, K20, Q71, 76 to 77, 98 to 100, G135, E150, N165, and N223; these read LAAG, GT, and YGD. D100 lines the Mg(2+) pocket. Position 223 (N223) interacts with Mg(2+). The tract at residues 226–246 is linker; sequence AQLAELERIHQRNVADALLVD. An N-acetyltransferase region spans residues 247–453; sequence GVTLADPARV…GYVRPVKKKS (207 aa). UDP-N-acetyl-alpha-D-glucosamine is bound by residues R329 and K347. Catalysis depends on H359, which acts as the Proton acceptor. UDP-N-acetyl-alpha-D-glucosamine contacts are provided by Y362 and N373. Acetyl-CoA contacts are provided by residues A376, 382–383, S401, and A419; that span reads NY.

The protein in the N-terminal section; belongs to the N-acetylglucosamine-1-phosphate uridyltransferase family. It in the C-terminal section; belongs to the transferase hexapeptide repeat family. In terms of assembly, homotrimer. The cofactor is Mg(2+).

It localises to the cytoplasm. The enzyme catalyses alpha-D-glucosamine 1-phosphate + acetyl-CoA = N-acetyl-alpha-D-glucosamine 1-phosphate + CoA + H(+). It catalyses the reaction N-acetyl-alpha-D-glucosamine 1-phosphate + UTP + H(+) = UDP-N-acetyl-alpha-D-glucosamine + diphosphate. Its pathway is nucleotide-sugar biosynthesis; UDP-N-acetyl-alpha-D-glucosamine biosynthesis; N-acetyl-alpha-D-glucosamine 1-phosphate from alpha-D-glucosamine 6-phosphate (route II): step 2/2. It participates in nucleotide-sugar biosynthesis; UDP-N-acetyl-alpha-D-glucosamine biosynthesis; UDP-N-acetyl-alpha-D-glucosamine from N-acetyl-alpha-D-glucosamine 1-phosphate: step 1/1. It functions in the pathway bacterial outer membrane biogenesis; LPS lipid A biosynthesis. In terms of biological role, catalyzes the last two sequential reactions in the de novo biosynthetic pathway for UDP-N-acetylglucosamine (UDP-GlcNAc). The C-terminal domain catalyzes the transfer of acetyl group from acetyl coenzyme A to glucosamine-1-phosphate (GlcN-1-P) to produce N-acetylglucosamine-1-phosphate (GlcNAc-1-P), which is converted into UDP-GlcNAc by the transfer of uridine 5-monophosphate (from uridine 5-triphosphate), a reaction catalyzed by the N-terminal domain. This chain is Bifunctional protein GlmU, found in Burkholderia ambifaria (strain ATCC BAA-244 / DSM 16087 / CCUG 44356 / LMG 19182 / AMMD) (Burkholderia cepacia (strain AMMD)).